Reading from the N-terminus, the 364-residue chain is Lytic cellulose monooxygenase (364 aa).

The N-terminal stretch at Met1 to Ala34 is a signal peptide. Residues His35 and His144 each coordinate Cu cation. The 191-residue stretch at His35–Val225 folds into the Chitin-binding type-4 domain. Positions Val234 to His261 are disordered. The span at Thr245 to Thr260 shows a compositional bias: pro residues. The 107-residue stretch at Pro258–Pro364 folds into the CBM2 domain.

The cofactor is Cu(2+).

The protein resides in the secreted. It catalyses the reaction [(1-&gt;4)-beta-D-glucosyl]n+m + reduced acceptor + O2 = [(1-&gt;4)-beta-D-glucosyl]m-1-(1-&gt;4)-D-glucono-1,5-lactone + [(1-&gt;4)-beta-D-glucosyl]n + acceptor + H2O.. It functions in the pathway glycan metabolism; cellulose degradation. Involved in the degradation of lignocellulosic biomass. Catalyzes the oxidative cleavage of glycosidic bonds in cellulosic substrates via a copper-dependent mechanism. Degrades phosphoric acid swollen cellulose (PASC) to oxidized cellooligosaccharides with degrees of polymerization of 4-8. Also shows activity on agricultural fiber paper pulps such as flax pulp. Is not active on chitin. This chain is Lytic cellulose monooxygenase, found in Streptomyces ambofaciens (strain ATCC 23877 / 3486 / DSM 40053 / JCM 4204 / NBRC 12836 / NRRL B-2516).